The sequence spans 237 residues: ATP synthase subunit a (237 aa).

The next 6 membrane-spanning stretches (helical) occupy residues Ser18–Leu38, Ile77–Phe97, Ile103–Met123, Leu132–Ile152, Leu185–Ala205, and Leu209–Leu229.

Belongs to the ATPase A chain family. F-type ATPases have 2 components, CF(1) - the catalytic core - and CF(0) - the membrane proton channel. CF(1) has five subunits: alpha(3), beta(3), gamma(1), delta(1), epsilon(1). CF(0) has three main subunits: a(1), b(2) and c(9-12). The alpha and beta chains form an alternating ring which encloses part of the gamma chain. CF(1) is attached to CF(0) by a central stalk formed by the gamma and epsilon chains, while a peripheral stalk is formed by the delta and b chains.

The protein localises to the cellular chromatophore membrane. In terms of biological role, key component of the proton channel; it plays a direct role in the translocation of protons across the membrane. This chain is ATP synthase subunit a, found in Rhodobacter capsulatus (Rhodopseudomonas capsulata).